The primary structure comprises 239 residues: Ribosomal RNA small subunit methyltransferase G (239 aa).

Residues glycine 78, phenylalanine 83, 129–130, and arginine 148 each bind S-adenosyl-L-methionine; that span reads AE.

This sequence belongs to the methyltransferase superfamily. RNA methyltransferase RsmG family.

The protein resides in the cytoplasm. Its function is as follows. Specifically methylates the N7 position of a guanine in 16S rRNA. In Alkaliphilus metalliredigens (strain QYMF), this protein is Ribosomal RNA small subunit methyltransferase G.